The sequence spans 1578 residues: Cilia- and flagella-associated protein 74 (1578 aa).

The segment covering 1-14 has biased composition (acidic residues); sequence MEEPTVQFSDEDLV. 2 disordered regions span residues 1–21 and 33–67; these read MEEP…PPMD and EVER…TTKD. The segment covering 33–65 has biased composition (basic and acidic residues); the sequence is EVERPSEGLEDEGSHSSAKKESKGAEKMRKSTT. 2 coiled-coil regions span residues 103–156 and 330–378; these read RQRM…QSKI and KYLF…RRQH.

It belongs to the CFAP74 family.

It is found in the cytoplasm. The protein resides in the cytoskeleton. Its subcellular location is the cilium axoneme. It localises to the flagellum axoneme. As part of the central apparatus of the cilium axoneme may play a role in cilium movement. May play an important role in sperm architecture and function. The polypeptide is Cilia- and flagella-associated protein 74 (Mus musculus (Mouse)).